We begin with the raw amino-acid sequence, 304 residues long: Thyroxine 5-deiodinase (304 aa).

Positions 1 to 23 (MPRQATSRLVVGEGEGSQGASGP) are disordered. At 1–44 (MPRQATSRLVVGEGEGSQGASGPAATMLRSLLLHSLRLCAQTAS) the chain is on the cytoplasmic side. A helical; Signal-anchor for type II membrane protein transmembrane segment spans residues 45–67 (CLVLFPRFLGTAFMLWLLDFLCI). Residues 68 to 304 (RKHFLGRRRR…QLHGARPRRV (237 aa)) are Extracellular-facing. The tract at residues 78-99 (GQPEPEVELNSEGEEVPPDDPP) is disordered. The segment covering 82–95 (PEVELNSEGEEVPP) has biased composition (acidic residues). U170 is an active-site residue. Residue U170 is a non-standard amino acid, selenocysteine.

The protein belongs to the iodothyronine deiodinase family. Monomer. Homodimer. May undergo minor heretodimerization with DIO1 and DIO2. In terms of tissue distribution, expressed in placenta and several fetal tissues.

The protein localises to the cell membrane. Its subcellular location is the endosome membrane. The catalysed reaction is 3,3',5'-triiodo-L-thyronine + iodide + A + H(+) = L-thyroxine + AH2. The enzyme catalyses 3,3'-diiodo-L-thyronine + iodide + A + H(+) = 3,3',5-triiodo-L-thyronine + AH2. It catalyses the reaction 3-iodo-L-thyronine + iodide + A + H(+) = 3,5-diiodo-L-thyronine + AH2. It carries out the reaction L-thyronine + iodide + A + H(+) = 3-iodo-L-thyronine + AH2. The catalysed reaction is 3',5'-diiodo-L-thyronine + iodide + A + H(+) = 3,3',5'-triiodo-L-thyronine + AH2. The enzyme catalyses 3'-iodo-L-thyronine + iodide + A + H(+) = 3,3'-diiodo-L-thyronine + AH2. It catalyses the reaction 3,3',5'-triiodothyronamine + iodide + A + H(+) = 3,3',5,5'-tetraiodothyronamine + AH2. It carries out the reaction 3',5'-diiodothyronamine + iodide + A + H(+) = 3,3',5'-triiodothyronamine + AH2. The catalysed reaction is 3,3'-diiodothyronamine + iodide + A + H(+) = 3,3',5-triiodothyronamine + AH2. The enzyme catalyses 3-iodothyronamine + iodide + A + H(+) = 3,5-diiodothyronamine + AH2. It catalyses the reaction 3'-iodothyronamine + iodide + A + H(+) = 3,3'-diiodothyronamine + AH2. It carries out the reaction thyronamine + iodide + A + H(+) = 3-iodothyronamine + AH2. Its function is as follows. Plays a crucial role in the metabolism of thyroid hormones (TH) and has specific roles in TH activation and inactivation by deiodination. Catalyzes the deiodination of L-thyroxine (T4) to 3,3',5'-triiodothyronine (rT3), 3,5,3'-triiodothyronine (T3) to 3,3'-diiodothyronine (3,3'-T2), 3,5-diiodothyronine (3,5-T2) to 3-monoiodothyronine (3-T1), rT3 to 3',5'-diiodothyronine (3',5'-T2) and 3,3'-T2 to 3'-monoiodothyronine (3'-T1) via inner-ring deiodination (IRD). Catalyzes the deiodination of 3-T1 to L-thyronine (T0) via outer-ring deiodination (ORD). Catalyzes the tyrosyl ring deiodinations of 3,3',5,5'-tetraiodothyronamine, 3,3',5'-triiodothyronamine, 3,5,3'-triiodothyronamine, 3,5-diiodothyronamine, 3,3'-diiodothyronamine and 3-iodothyronamine. This chain is Thyroxine 5-deiodinase (DIO3), found in Homo sapiens (Human).